The following is a 525-amino-acid chain: Ubiquitin carboxyl-terminal hydrolase 22 (525 aa).

The segment at Pro21 to Met138 adopts a UBP-type zinc-finger fold. Positions 23, 25, 63, 66, 76, 79, 84, 89, 93, 99, 112, and 115 each coordinate Zn(2+). Lys129 bears the N6-acetyllysine mark. A Phosphothreonine; by CDK1 modification is found at Thr147. The 345-residue stretch at Arg176–Gln520 folds into the USP domain. The active-site Nucleophile is the Cys185. At Ser237 the chain carries Phosphoserine; by CDK1. His479 functions as the Proton acceptor in the catalytic mechanism.

This sequence belongs to the peptidase C19 family. UBP8 subfamily. In terms of assembly, component of some SAGA transcription coactivator-HAT complexes, at least composed of ATXN7, ATXN7L3, ENY2, GCN5L2, SUPT3H, TAF10, TRRAP and USP22. Within the SAGA complex, ATXN7L3, ENY2 and USP22 form a subcomplex required for histone deubiquitination. Interacts directly with ATXN7L3; leading to its recruitment to the SAGA complex. Interacts with ATXN7L3 and weakly with ATXN7L3B. Interacts with MED1. In terms of processing, phosphorylated in G2/M phase, but not in G1 phase by CDK1. Post-translationally, ubiquitinated and subsequently degraded in a CDC20-dependent manner. In terms of tissue distribution, moderately expressed in various tissues including heart and skeletal muscle, and weakly expressed in lung and liver.

It localises to the nucleus. It is found in the cytoplasm. The enzyme catalyses Thiol-dependent hydrolysis of ester, thioester, amide, peptide and isopeptide bonds formed by the C-terminal Gly of ubiquitin (a 76-residue protein attached to proteins as an intracellular targeting signal).. In terms of biological role, deubiquitinase that plays a role in several cellular processes including transcriptional regulation, cell cycle progression or innate immunity. As part of the transcription regulatory histone acetylation (HAT) complex SAGA, catalyzes the deubiquitination of both histones H2A and H2B, thereby acting as a transcriptional coactivator. Recruited to specific gene promoters by activators such as MYC, where it is required for transcription. Facilitates cell-cycle progression by stabilizing CCNB1 and antagonizing its proteasome-mediated degradation in a cell cycle-specific manner. Modulates cell cycle progression and apoptosis also by antagonizing TP53 transcriptional activation through deacetylase SIRT1 stabilization. Plays multiple roles in immunity and inflammation. Participates in antiviral response by deubiquitinating the importin KPNA2, leading to IRF3 nuclear translocation and subsequent type I interferon production. Acts as a central regulator of type III IFN signaling by negatively regulating STING1 activation and ubiquitination. Inhibits NLRP3 inflammasome activation by promoting NLRP3 degradation through ATG5-dependent autophagy. Deubiquitinates CD274 to induce its stabilization and thereby participates in maintenance of immune tolerance to self. Controls necroptotic cell death by regulating RIPK3 phosphorylation and ubiquitination. During bacterial infection, promotes pro-inflammatory response by targeting TRAF6 and removing its 'Lys-48'-linked polyubiquitination. The protein is Ubiquitin carboxyl-terminal hydrolase 22 (USP22) of Homo sapiens (Human).